The chain runs to 295 residues: Acetyl-coenzyme A carboxylase carboxyl transferase subunit beta (295 aa).

Positions 1–20 (MSWLSKLMPSGIRTENTPAK) are disordered. The region spanning 28-295 (LWEKCSNCGS…QPHPQDADAA (268 aa)) is the CoA carboxyltransferase N-terminal domain. Zn(2+) contacts are provided by cysteine 32, cysteine 35, cysteine 51, and cysteine 54. The segment at 32 to 54 (CSNCGSALYGPELEENLEVCPKC) adopts a C4-type zinc-finger fold.

It belongs to the AccD/PCCB family. In terms of assembly, acetyl-CoA carboxylase is a heterohexamer composed of biotin carboxyl carrier protein (AccB), biotin carboxylase (AccC) and two subunits each of ACCase subunit alpha (AccA) and ACCase subunit beta (AccD). Zn(2+) serves as cofactor.

The protein localises to the cytoplasm. The catalysed reaction is N(6)-carboxybiotinyl-L-lysyl-[protein] + acetyl-CoA = N(6)-biotinyl-L-lysyl-[protein] + malonyl-CoA. It functions in the pathway lipid metabolism; malonyl-CoA biosynthesis; malonyl-CoA from acetyl-CoA: step 1/1. Functionally, component of the acetyl coenzyme A carboxylase (ACC) complex. Biotin carboxylase (BC) catalyzes the carboxylation of biotin on its carrier protein (BCCP) and then the CO(2) group is transferred by the transcarboxylase to acetyl-CoA to form malonyl-CoA. This Xanthomonas campestris pv. campestris (strain B100) protein is Acetyl-coenzyme A carboxylase carboxyl transferase subunit beta.